The chain runs to 113 residues: MGGLEPCSRLLLLPLLLAVSGLRPVQAQAQSDCSCSTVSPGVLAGIVMGDLVLTVLIALAVYFLGRLVPRGRGAAEAATRKQRITETESPYQELQGQRSDVYSDLNTQRPYYK.

Residues 1–21 form the signal peptide; the sequence is MGGLEPCSRLLLLPLLLAVSG. Residues 22-40 are Extracellular-facing; it reads LRPVQAQAQSDCSCSTVSP. A helical membrane pass occupies residues 41-61; that stretch reads GVLAGIVMGDLVLTVLIALAV. Residue Asp-50 participates in Ca(2+) binding. Over 62–113 the chain is Cytoplasmic; that stretch reads YFLGRLVPRGRGAAEAATRKQRITETESPYQELQGQRSDVYSDLNTQRPYYK. Residues 75-113 are disordered; it reads AEAATRKQRITETESPYQELQGQRSDVYSDLNTQRPYYK. Positions 80–108 constitute an ITAM domain; it reads RKQRITETESPYQELQGQRSDVYSDLNTQ. The span at 87-113 shows a compositional bias: polar residues; the sequence is TESPYQELQGQRSDVYSDLNTQRPYYK. Tyr-91 and Tyr-102 each carry phosphotyrosine.

It belongs to the TYROBP family. Homodimer; disulfide-linked. Homotrimer; disulfide-linked. Homotetramer; disulfide-linked. Homotrimers and homotetramers form when low levels of partner receptors are available and are competitive with assembly with interacting receptors. They may represent alternative oligomerization states or may be intermediates in the receptor assembly process. Binding of a metal cation aids in homooligomerization through coordination of the metal ion by the subunits of the oligomer. Interacts with TREM1. Interacts with TREM2. Interacts with SIRPB1. Interacts with CLECSF5. Interacts with SIGLEC14. Interacts with CD300LB and CD300E. Interacts with CD300C2. Interacts (via ITAM domain) with SYK (via SH2 domains); activates SYK mediating neutrophil and macrophage integrin-mediated activation. Interacts with KLRC2, KIR2DS3 and KIR2DS5. Interacts with CD300H. Interacts with KIR2DS1. Interacts with KLRD1. Interacts with SIGLEC1. Post-translationally, following ligand binding by associated receptors, tyrosine phosphorylated in the ITAM domain which leads to activation of additional tyrosine kinases and subsequent cell activation. In terms of tissue distribution, expressed at low levels in the early development of the hematopoietic system and in the promonocytic stage and at high levels in mature monocytes. Expressed in hematological cells and tissues such as peripheral blood leukocytes and spleen. Also found in bone marrow, lymph nodes, placenta, lung and liver. Expressed at lower levels in different parts of the brain especially in the basal ganglia and corpus callosum.

Its subcellular location is the cell membrane. Adapter protein which non-covalently associates with activating receptors found on the surface of a variety of immune cells to mediate signaling and cell activation following ligand binding by the receptors. TYROBP is tyrosine-phosphorylated in the ITAM domain following ligand binding by the associated receptors which leads to activation of additional tyrosine kinases and subsequent cell activation. Also has an inhibitory role in some cells. Non-covalently associates with activating receptors of the CD300 family to mediate cell activation. Also mediates cell activation through association with activating receptors of the CD200R family. Required for neutrophil activation mediated by integrin. Required for the activation of myeloid cells mediated by the CLEC5A/MDL1 receptor. Associates with natural killer (NK) cell receptors such as KIR2DS2 and the KLRD1/KLRC2 heterodimer to mediate NK cell activation. Also enhances trafficking and cell surface expression of NK cell receptors KIR2DS1, KIR2DS2 and KIR2DS4 and ensures their stability at the cell surface. Associates with SIRPB1 to mediate activation of myeloid cells such as monocytes and dendritic cells. Associates with TREM1 to mediate activation of neutrophils and monocytes. Associates with TREM2 on monocyte-derived dendritic cells to mediate up-regulation of chemokine receptor CCR7 and dendritic cell maturation and survival. Association with TREM2 mediates cytokine-induced formation of multinucleated giant cells which are formed by the fusion of macrophages. Stabilizes the TREM2 C-terminal fragment (TREM2-CTF) produced by TREM2 ectodomain shedding which suppresses the release of pro-inflammatory cytokines. In microglia, required with TREM2 for phagocytosis of apoptotic neurons. Required with ITGAM/CD11B in microglia to control production of microglial superoxide ions which promote the neuronal apoptosis that occurs during brain development. Promotes pro-inflammatory responses in microglia following nerve injury which accelerates degeneration of injured neurons. Positively regulates the expression of the IRAK3/IRAK-M kinase and IL10 production by liver dendritic cells and inhibits their T cell allostimulatory ability. Negatively regulates B cell proliferation. Required for CSF1-mediated osteoclast cytoskeletal organization. Positively regulates multinucleation during osteoclast development. The chain is TYRO protein tyrosine kinase-binding protein from Homo sapiens (Human).